The primary structure comprises 449 residues: UDP-N-acetylmuramoylalanine--D-glutamate ligase (449 aa).

Residue 107–113 (GSNGKST) coordinates ATP.

This sequence belongs to the MurCDEF family.

Its subcellular location is the cytoplasm. It catalyses the reaction UDP-N-acetyl-alpha-D-muramoyl-L-alanine + D-glutamate + ATP = UDP-N-acetyl-alpha-D-muramoyl-L-alanyl-D-glutamate + ADP + phosphate + H(+). Its pathway is cell wall biogenesis; peptidoglycan biosynthesis. Functionally, cell wall formation. Catalyzes the addition of glutamate to the nucleotide precursor UDP-N-acetylmuramoyl-L-alanine (UMA). The polypeptide is UDP-N-acetylmuramoylalanine--D-glutamate ligase (Hydrogenovibrio crunogenus (strain DSM 25203 / XCL-2) (Thiomicrospira crunogena)).